A 202-amino-acid polypeptide reads, in one-letter code: ATP-dependent Clp protease proteolytic subunit (202 aa).

The active-site Nucleophile is the S106. The active site involves H131.

It belongs to the peptidase S14 family. Fourteen ClpP subunits assemble into 2 heptameric rings which stack back to back to give a disk-like structure with a central cavity, resembling the structure of eukaryotic proteasomes.

It is found in the cytoplasm. The enzyme catalyses Hydrolysis of proteins to small peptides in the presence of ATP and magnesium. alpha-casein is the usual test substrate. In the absence of ATP, only oligopeptides shorter than five residues are hydrolyzed (such as succinyl-Leu-Tyr-|-NHMec, and Leu-Tyr-Leu-|-Tyr-Trp, in which cleavage of the -Tyr-|-Leu- and -Tyr-|-Trp bonds also occurs).. Cleaves peptides in various proteins in a process that requires ATP hydrolysis. Has a chymotrypsin-like activity. Plays a major role in the degradation of misfolded proteins. This chain is ATP-dependent Clp protease proteolytic subunit, found in Shewanella sp. (strain W3-18-1).